The chain runs to 400 residues: Serine/threonine transporter SstT (400 aa).

8 helical membrane passes run 14–34 (IIIAIILGIGVALLFPTVTPY), 48–68 (SVAPILAFVLVLSSIANFQVG), 76–96 (VLLLYVVGMLLAAFSAVIASL), 136–156 (AISEANFIGILAWAIGLGLAM), 177–197 (IIHKVIAFAPVGIFGLVAVTF), 211–231 (LLAVLLGTMLFVALVINPILV), 293–313 (LAGAAVTITVLTLATVHTLGI), and 334–354 (ASGVAGGSLLLIPVACSLFGI).

Belongs to the dicarboxylate/amino acid:cation symporter (DAACS) (TC 2.A.23) family.

It is found in the cell inner membrane. It carries out the reaction L-serine(in) + Na(+)(in) = L-serine(out) + Na(+)(out). The enzyme catalyses L-threonine(in) + Na(+)(in) = L-threonine(out) + Na(+)(out). Functionally, involved in the import of serine and threonine into the cell, with the concomitant import of sodium (symport system). In Acinetobacter baumannii (strain SDF), this protein is Serine/threonine transporter SstT.